The chain runs to 372 residues: Glutamate 5-kinase (372 aa).

Residue Lys-14 coordinates ATP. Ser-54, Asp-141, and Asn-153 together coordinate substrate. 173–174 (TD) is an ATP binding site. The PUA domain occupies 280-358 (RGTLTLDEGA…DEIEKLLGYV (79 aa)).

It belongs to the glutamate 5-kinase family.

The protein localises to the cytoplasm. It catalyses the reaction L-glutamate + ATP = L-glutamyl 5-phosphate + ADP. Its pathway is amino-acid biosynthesis; L-proline biosynthesis; L-glutamate 5-semialdehyde from L-glutamate: step 1/2. Functionally, catalyzes the transfer of a phosphate group to glutamate to form L-glutamate 5-phosphate. The chain is Glutamate 5-kinase from Stutzerimonas stutzeri (strain A1501) (Pseudomonas stutzeri).